The following is a 473-amino-acid chain: Serine palmitoyltransferase 1 (473 aa).

The Lumenal portion of the chain corresponds to 1–15; that stretch reads MATATEQWVLVEMVQ. The segment at 1 to 66 is interaction with SPTLC2; sequence MATATEQWVL…KEELIEEWQP (66 aa). The chain crosses the membrane as a helical span at residues 16-36; sequence ALYEAPAYHLILEGILILWII. Topologically, residues 37–473 are cytoplasmic; it reads RLLFSKTYKL…IKEVAQAVLL (437 aa). The residue at position 164 (tyrosine 164) is a Phosphotyrosine; by ABL.

The protein belongs to the class-II pyridoxal-phosphate-dependent aminotransferase family. As to quaternary structure, component of the serine palmitoyltransferase (SPT) complex, which is also composed of SPTLC2 or SPTLC3 and SPTSSA or SPTSSB. The heterodimer with SPTLC2 or SPTLC3 forms the catalytic core of the enzyme, while SPTSSA or SPTSSB subunits determine substrate specificity. SPT also interacts with ORMDL proteins, especially ORMDL3, which negatively regulate SPT activity in the presence of ceramides. Forms dimers of heterodimers with SPTLC2. Interacts with RTN4. Requires pyridoxal 5'-phosphate as cofactor. Phosphorylation at Tyr-164 inhibits activity and promotes cell survival.

The protein localises to the endoplasmic reticulum membrane. It catalyses the reaction L-serine + hexadecanoyl-CoA + H(+) = 3-oxosphinganine + CO2 + CoA. The enzyme catalyses octadecanoyl-CoA + L-serine + H(+) = 3-oxoeicosasphinganine + CO2 + CoA. The catalysed reaction is tetradecanoyl-CoA + L-serine + H(+) = 3-oxohexadecasphinganine + CO2 + CoA. It carries out the reaction dodecanoyl-CoA + L-serine + H(+) = 3-oxotetradecasphinganine + CO2 + CoA. It participates in lipid metabolism; sphingolipid metabolism. SPT complex catalytic activity is negatively regulated by ORMDL proteins, including ORMDL3, in the presence of ceramides. This mechanism allows to maintain ceramide levels at sufficient concentrations for the production of complex sphingolipids, but which prevents the accumulation of ceramides to levels that trigger apoptosis. In terms of biological role, component of the serine palmitoyltransferase multisubunit enzyme (SPT) that catalyzes the initial and rate-limiting step in sphingolipid biosynthesis by condensing L-serine and activated acyl-CoA (most commonly palmitoyl-CoA) to form long-chain bases. The SPT complex is also composed of SPTLC2 or SPTLC3 and SPTSSA or SPTSSB. Within this complex, the heterodimer with SPTLC2 or SPTLC3 forms the catalytic core. The composition of the serine palmitoyltransferase (SPT) complex determines the substrate preference. The SPTLC1-SPTLC2-SPTSSA complex shows a strong preference for C16-CoA substrate, while the SPTLC1-SPTLC3-SPTSSA isozyme uses both C14-CoA and C16-CoA as substrates, with a slight preference for C14-CoA. The SPTLC1-SPTLC2-SPTSSB complex shows a strong preference for C18-CoA substrate, while the SPTLC1-SPTLC3-SPTSSB isozyme displays an ability to use a broader range of acyl-CoAs, without apparent preference. Required for adipocyte cell viability and metabolic homeostasis. In Macaca fascicularis (Crab-eating macaque), this protein is Serine palmitoyltransferase 1 (SPTLC1).